The chain runs to 96 residues: Large ribosomal subunit protein bL21 (96 aa).

The protein belongs to the bacterial ribosomal protein bL21 family. In terms of assembly, part of the 50S ribosomal subunit. Contacts protein L20.

This protein binds to 23S rRNA in the presence of protein L20. In Sulfurihydrogenibium sp. (strain YO3AOP1), this protein is Large ribosomal subunit protein bL21.